The chain runs to 580 residues: Sensor histidine kinase YvrG (580 aa).

The Cytoplasmic segment spans residues 1–6; sequence MRLRWK. The chain crosses the membrane as a helical span at residues 7–27; it reads FLFHFFGQMLIVILLLTVMLV. Residues 28 to 261 are Extracellular-facing; the sequence is ASFFYLDARF…KSFLKVVLKA (234 aa). A helical membrane pass occupies residues 262–282; the sequence is MFLVMAVLFMYIIWMTVWYMF. Topologically, residues 283 to 580 are cytoplasmic; sequence RFGLPIFHTI…TVITILFKKQ (298 aa). The region spanning 363-580 is the Histidine kinase domain; it reads GLSHDLKTPL…TVITILFKKQ (218 aa). A Phosphohistidine; by autocatalysis modification is found at histidine 366.

It localises to the cell membrane. The enzyme catalyses ATP + protein L-histidine = ADP + protein N-phospho-L-histidine.. Member of the two-component regulatory system YvrG/YvrH that positively regulates 7 transcriptional units (wprA, wapA-yxxG, dltABCDE, sunA, sunT-bdbA-yolJ-bdbB, sigO-rsoA, and sigX-rsiX), and negatively regulates the lytABC operon. Probably activates YvrH by phosphorylation. In Bacillus subtilis (strain 168), this protein is Sensor histidine kinase YvrG (yvrG).